Here is a 173-residue protein sequence, read N- to C-terminus: Small ribosomal subunit protein uS7 (173 aa).

Belongs to the universal ribosomal protein uS7 family. Part of the 30S ribosomal subunit. Contacts proteins S9 and S11.

Its function is as follows. One of the primary rRNA binding proteins, it binds directly to 16S rRNA where it nucleates assembly of the head domain of the 30S subunit. Is located at the subunit interface close to the decoding center, probably blocks exit of the E-site tRNA. The chain is Small ribosomal subunit protein uS7 from Orientia tsutsugamushi (strain Ikeda) (Rickettsia tsutsugamushi).